The following is a 249-amino-acid chain: 2,3-bisphosphoglycerate-dependent phosphoglycerate mutase (249 aa).

Residues 8-15 (RHGESTWN), 21-22 (TG), R60, 87-90 (ERHY), K98, 114-115 (RR), and 183-184 (GN) contribute to the substrate site. H9 acts as the Tele-phosphohistidine intermediate in catalysis. E87 functions as the Proton donor/acceptor in the catalytic mechanism.

It belongs to the phosphoglycerate mutase family. BPG-dependent PGAM subfamily. In terms of assembly, homodimer.

The catalysed reaction is (2R)-2-phosphoglycerate = (2R)-3-phosphoglycerate. It functions in the pathway carbohydrate degradation; glycolysis; pyruvate from D-glyceraldehyde 3-phosphate: step 3/5. Catalyzes the interconversion of 2-phosphoglycerate and 3-phosphoglycerate. The polypeptide is 2,3-bisphosphoglycerate-dependent phosphoglycerate mutase (Aromatoleum aromaticum (strain DSM 19018 / LMG 30748 / EbN1) (Azoarcus sp. (strain EbN1))).